Reading from the N-terminus, the 1022-residue chain is MSRRTAEMFQQAFLSTLLCVALVPLHAQFDDEPVTSCTEKTDCPISVYFVIDTSESIALQTVPIQSLVDQIKQFIPRFIEKLENEVYQNQVSITWMFGGLHYSDVVEIYSPLTRSKDTYLTKLRAIRYLGRGTFTDCAISNMTQQFQSQTARDVKFAVVITDGHVTGSPCGGMKMQAERARDMGIKLFAVAPSEDVYEQGLREIASPPHDLYRSNYTITPKDALHIDENTIERIIKAMKHEAYAECYKMTCLEIAGPAGPKGYRGQKGAKGNMGEPGSPGLKGRQGDPGIEGPIGYPGPKGVPGLKGEKGEIGSDGRRGAAGLAGRNGTDGQKGKLGRIGPPGCKGDRGDKGPDGYPGDAGDQGERGDEGMKGDPGRPGRSGPPGPPGEKGSPGIPGNPGAQGPGGTKGRKGETGPPGPKGEPGRRGDPGTKGSKGGPGAKGERGDPGPEGPRGLPGEVGNKGARGDQGLPGPRGPTGAVGEPGNIGSRGDPGDLGPRGDAGPPGPKGDRGRPGFSYPGPRGPQGDKGEKGQPGPKGGRGELGPKGTQGTKGEKGEPGDPGPRGEPGTRGPPGEAGPEGTPGPPGDPGLTDCDVMTYVRETCGCCDCEKRCGALDIMFVIDSSESIGYTNFTLEKNFVVNVVSRLGSIAKDPKSETGARVGVVQYSHEGTFEAIKLDDERINSLSSFKEAVKRLEWIAGGTWTPSALQFAYNKLIKESRREKAQVFAVVITDGRYDPRDDDKNLGALCGRDVLVNTIGIGDIFDQPEQSETLVSIACNEPQRVQKMRLFSDLVAEEFIDKMEDMLCPDPQIVCPELPCQTELAVAQCTQRPVDIVFLLDGSERIGEQNFHRAHHFVEQVAQQLTLARRNDDNMNARIALLQYGSEREQNVVFPLTYNLTEISNALAQIKYLDSSSNIGSAIIHAINNIVLSPGNGQRVARRNAELSFVFITDGITGSKNLEEAINSMKKQDVMPTVVALGSDVDMDVLLKLGLGDRAAIFREKDYESLSQPSFFDRFIRWIC.

Residues 1-27 (MSRRTAEMFQQAFLSTLLCVALVPLHA) form the signal peptide. The segment at 28-255 (QFDDEPVTSC…CYKMTCLEIA (228 aa)) is nonhelical region. The VWFA 1 domain occupies 44 to 168 (PISVYFVIDT…VITDGHVTGS (125 aa)). 2 N-linked (GlcNAc...) asparagine glycosylation sites follow: asparagine 141 and asparagine 215. The segment at 256 to 590 (GPAGPKGYRG…PGPPGDPGLT (335 aa)) is triple-helical region. The disordered stretch occupies residues 263-587 (YRGQKGAKGN…EGTPGPPGDP (325 aa)). Low complexity predominate over residues 287–299 (DPGIEGPIGYPGP). The segment covering 306-318 (KGEKGEIGSDGRR) has biased composition (basic and acidic residues). Asparagine 327 carries N-linked (GlcNAc...) asparagine glycosylation. 2 short sequence motifs (cell attachment site) span residues 348–350 (RGD) and 366–368 (RGD). Over residues 363-377 (QGERGDEGMKGDPGR) the composition is skewed to basic and acidic residues. Over residues 389 to 399 (EKGSPGIPGNP) the composition is skewed to low complexity. Short sequence motifs (cell attachment site) lie at residues 426–428 (RGD), 444–446 (RGD), 465–467 (RGD), 489–491 (RGD), and 498–500 (RGD). The tract at residues 514 to 519 (GFSYPG) is interruption in collagenous region. Gly residues predominate over residues 534 to 543 (GPKGGRGELG). A nonhelical region region spans residues 591–1022 (DCDVMTYVRE…FFDRFIRWIC (432 aa)). 2 consecutive VWFA domains span residues 613–738 (ALDI…YDPR) and 833–957 (DIVF…ITGS). N-linked (GlcNAc...) asparagine glycans are attached at residues asparagine 630 and asparagine 897.

Belongs to the type VI collagen family. As to quaternary structure, trimers composed of three different chains: alpha 1(VI), alpha 2(VI), and alpha 3(VI). Post-translationally, prolines at the third position of the tripeptide repeating unit (G-X-Y) are hydroxylated in some or all of the chains.

The protein resides in the secreted. Its subcellular location is the extracellular space. It is found in the extracellular matrix. Its function is as follows. Collagen VI acts as a cell-binding protein. The protein is Collagen alpha-2(VI) chain (COL6A2) of Gallus gallus (Chicken).